The primary structure comprises 118 residues: uncharacterized protein (118 aa).

This is an uncharacterized protein from Methanocaldococcus jannaschii (strain ATCC 43067 / DSM 2661 / JAL-1 / JCM 10045 / NBRC 100440) (Methanococcus jannaschii).